The primary structure comprises 227 residues: PKHD-type hydroxylase Pden_4677 (227 aa).

Positions 78–178 constitute a Fe2OG dioxygenase domain; that stretch reads HILPPMFNRY…RWASFFWAQS (101 aa). Fe cation-binding residues include histidine 96, aspartate 98, and histidine 159. Arginine 169 serves as a coordination point for 2-oxoglutarate.

The cofactor is Fe(2+). L-ascorbate serves as cofactor.

The chain is PKHD-type hydroxylase Pden_4677 from Paracoccus denitrificans (strain Pd 1222).